Reading from the N-terminus, the 871-residue chain is Synaptonemal complex protein 1 (871 aa).

The tract at residues 1–40 (MQKLGFPAMKSLDKPRSLSGSANMYSFSNRKPPDSVSSGS) is disordered. The segment covering 18–40 (LSGSANMYSFSNRKPPDSVSSGS) has biased composition (polar residues). Coiled-coil stretches lie at residues 58-304 (MRTD…DKKN) and 331-608 (LALD…EESK). 2 disordered regions span residues 708 to 741 (VMSDNPPEEQEVNSNKNYSISKDSRLGGSKRSEH) and 778 to 871 (SVLS…YAFD). The span at 719 to 728 (VNSNKNYSIS) shows a compositional bias: polar residues. A compositionally biased stretch (basic and acidic residues) spans 729 to 741 (KDSRLGGSKRSEH). Polar residues predominate over residues 831–847 (LTPQSIAKGTGMTSHAR).

Its subcellular location is the nucleus. Required for chromosome synapsis and normal fidelity of crossing over. The protein is Synaptonemal complex protein 1 (ZYP1A) of Arabidopsis thaliana (Mouse-ear cress).